The chain runs to 399 residues: MSQYHTFTAHDAVAYAQQFAGIDNPSELVSAQEVGDGNLNLVFKVFDRQGVSRAIVKQALPYVRCVGESWPLTLDRARLEAQTLVAHYQHSPQHTVKIHHFDPELAVMVMEDLSDHRIWRGELIANVYYPQAARQLGDYLAQVLFHTSDFYLHPHEKKAQVAQFINPAMCEITEDLFFNDPYQIHERNNYPAELEADVAALRDDAQLKLAVAALKHRFFAHAEALLHGDIHSGSIFVAEGSLKAIDAEFGYFGPIGFDIGTAIGNLLLNYCGLPGQLGIRDAAAAREQRLNDIHQLWTTFAERFQALAAEKTRDAALAYPGYASAFLKKVWADAVGFCGSELIRRSVGLSHVADIDTIQDDAMRHECLRHAITLGRALIVLAERIDSVDELLARVRQYS.

Residues asparagine 40, lysine 57, and glutamate 111 to leucine 113 contribute to the ATP site. Aspartate 229 contributes to the substrate binding site. Position 246 to 248 (aspartate 246 to glutamate 248) interacts with ATP. Arginine 344 contributes to the substrate binding site.

This sequence belongs to the methylthioribose kinase family. As to quaternary structure, homodimer.

It catalyses the reaction 5-(methylsulfanyl)-D-ribose + ATP = 5-(methylsulfanyl)-alpha-D-ribose 1-phosphate + ADP + H(+). Its pathway is amino-acid biosynthesis; L-methionine biosynthesis via salvage pathway; S-methyl-5-thio-alpha-D-ribose 1-phosphate from S-methyl-5'-thioadenosine (hydrolase route): step 2/2. In terms of biological role, catalyzes the phosphorylation of methylthioribose into methylthioribose-1-phosphate. This is Methylthioribose kinase from Klebsiella pneumoniae subsp. pneumoniae (strain ATCC 700721 / MGH 78578).